The primary structure comprises 223 residues: uncharacterized protein (223 aa).

This is an uncharacterized protein from Dryophytes versicolor (chameleon treefrog).